A 196-amino-acid chain; its full sequence is Rac-like GTP-binding protein ARAC5 (196 aa).

16–21 (AVGKTC) provides a ligand contact to GTP. The Effector region motif lies at 35–43 (YVPTVFDNF). Residues 119–121 (KLD) and 159–161 (SSK) contribute to the GTP site. Cys193 carries the post-translational modification Cysteine methyl ester. Cys193 is lipidated: S-geranylgeranyl cysteine. Residues 194–196 (VFL) constitute a propeptide, removed in mature form.

It belongs to the small GTPase superfamily. Rho family. As to quaternary structure, interacts with GDI1 and ROPGEF8 homodimer. Binds to SPK1. As to expression, ubiquitous. Preferentially expressed at the tip of root hairs.

It localises to the cytoplasm. The protein resides in the membrane. The protein localises to the cell membrane. Involved in cell polarity control during the actin-dependent tip growth of root hairs, thus regulating root hair length and root hair initiation. In terms of biological role, inactive GDP-bound Rho GTPases reside in the cytosol, are found in a complex with Rho GDP-dissociation inhibitors (Rho GDIs), and are released from the GDI protein in order to translocate to membranes upon activation. This Arabidopsis thaliana (Mouse-ear cress) protein is Rac-like GTP-binding protein ARAC5.